Consider the following 276-residue polypeptide: Secreted LysM effector LysM10 (276 aa).

The first 22 residues, 1–22, serve as a signal peptide directing secretion; sequence MLLSLVKFGILSVFLLAQEAVA. N27, N104, and N140 each carry an N-linked (GlcNAc...) asparagine glycan. The LysM domain occupies 219–264; the sequence is KTYIAKEDDTCKSISEAQSISTDRLVEVNHLDYSCSSLTSGTALCI. N267 carries an N-linked (GlcNAc...) asparagine glycan.

It belongs to the secreted LysM effector family.

Its subcellular location is the secreted. Functionally, secreted LysM effector that might have a role in sequestration of chitin oligosaccharides (breakdown products of fungal cell walls that are released during invasion and act as triggers of host immunity) to dampen host defense. The protein is Secreted LysM effector LysM10 of Penicillium expansum (Blue mold rot fungus).